The primary structure comprises 128 residues: Head peptide (128 aa).

A signal peptide spans Met-1 to Asp-22. Gln-23 is modified (pyrrolidone carboxylic acid). A Hydroxyproline; partial modification is found at Pro-26. Residues Ser-27 to Asn-128 form a disordered region. Phe-32 is subject to Phenylalanine amide. Positions Ser-35 to Ala-55 are excised as a propeptide. At Gln-56 the chain carries Pyrrolidone carboxylic acid. Pro-59 carries the post-translational modification Hydroxyproline; partial. The residue at position 65 (Phe-65) is a Phenylalanine amide. The segment covering Gly-66 to Ser-78 has biased composition (basic and acidic residues). Residues Ser-68–Ala-79 constitute a propeptide that is removed on maturation. Position 80 is a pyrrolidone carboxylic acid (Gln-80). Pro-83 is subject to Hydroxyproline; partial. A Phenylalanine amide modification is found at Phe-89. The propeptide occupies Ser-92 to Asn-128. A compositionally biased stretch (basic residues) spans Arg-115 to Asn-128.

This sequence belongs to the NPY family. Expressed in the brain, terminal ganglion, and midgut of adults: numerous neurosecretory cells and midgut endocrine cells. Expression is dynamic depending on reproductive cycle.

Its subcellular location is the secreted. Functionally, has a role in inhibiting host-seeking behavior during a reproductive cycle. The chain is Head peptide from Aedes aegypti (Yellowfever mosquito).